The sequence spans 130 residues: Hydrogenase maturation factor HypA (130 aa).

His-2 provides a ligand contact to Ni(2+). Positions 74, 77, 90, and 93 each coordinate Zn(2+).

The protein belongs to the HypA/HybF family.

Functionally, involved in the maturation of [NiFe] hydrogenases. Required for nickel insertion into the metal center of the hydrogenase. This Desulfatibacillum aliphaticivorans protein is Hydrogenase maturation factor HypA.